A 72-amino-acid chain; its full sequence is Gas vesicle protein A (72 aa).

Belongs to the gas vesicle GvpA family. In terms of assembly, the gas vesicle shell is 2 nm thick and consists of a single layer of this protein. It forms helical ribs nearly perpendicular to the long axis of the vesicle.

It localises to the gas vesicle shell. In terms of biological role, gas vesicles are hollow, gas filled proteinaceous nanostructures found in some microorganisms. During planktonic growth they allow positioning of the organism at a favorable depth for light or nutrient acquisition. GvpA forms the protein shell. The chain is Gas vesicle protein A from Pseudanabaena galeata (strain PCC 6901).